Here is a 349-residue protein sequence, read N- to C-terminus: Protein RecA (349 aa).

64 to 71 (GPESSGKT) contributes to the ATP binding site.

It belongs to the RecA family.

The protein resides in the cytoplasm. Its function is as follows. Can catalyze the hydrolysis of ATP in the presence of single-stranded DNA, the ATP-dependent uptake of single-stranded DNA by duplex DNA, and the ATP-dependent hybridization of homologous single-stranded DNAs. It interacts with LexA causing its activation and leading to its autocatalytic cleavage. This is Protein RecA from Rhodopseudomonas palustris (strain ATCC BAA-98 / CGA009).